The following is a 180-amino-acid chain: Inner membrane-spanning protein YciB (180 aa).

The next 5 helical transmembrane spans lie at 10–30, 47–67, 74–94, 121–141, and 151–171; these read IIAFFVFYKLADIYVATGVLM, ITTRHWVILAVVMLFGAVTLL, IKMKVSVVYVAIALMLLGGLI, YAWIIFCLALAAVNLYIAEFW, and VFGILGISLVFTIGTGFYMYH.

It belongs to the YciB family.

It is found in the cell inner membrane. Plays a role in cell envelope biogenesis, maintenance of cell envelope integrity and membrane homeostasis. The chain is Inner membrane-spanning protein YciB from Idiomarina loihiensis (strain ATCC BAA-735 / DSM 15497 / L2-TR).